The following is a 164-amino-acid chain: Inner membrane assembly complex subunit 17 (164 aa).

The transit peptide at 1-28 (MIKTAKISTLRLAITRNARNLSFTTLVR) directs the protein to the mitochondrion. The Mitochondrial matrix segment spans residues 29–97 (SPEVDNSKIK…NEVPLKRFTR (69 aa)). The chain crosses the membrane as a helical span at residues 98–118 (PLWIFILMASTFYLGAHLVWW). Topologically, residues 119–164 (KLAYEKKEVELKHKVDSLETTLKDVMKEKATGPTPCNNKKSWYKFW) are mitochondrial intermembrane. Residues 121-149 (AYEKKEVELKHKVDSLETTLKDVMKEKAT) are a coiled coil.

Belongs to the INA17 family. Component of the inner membrane assembly (INA) complex, composed of INA17 and INA22. Interacts with a subset of F(1)F(0)-ATP synthase subunits of the F(1)-domain and the peripheral stalk.

It localises to the mitochondrion inner membrane. In terms of biological role, component of the INA complex (INAC) that promotes the biogenesis of mitochondrial F(1)F(0)-ATP synthase. INAC facilitates the assembly of the peripheral stalk and promotes the assembly of the catalytic F(1)-domain with the membrane-embedded F(0)-domain. The chain is Inner membrane assembly complex subunit 17 from Candida glabrata (strain ATCC 2001 / BCRC 20586 / JCM 3761 / NBRC 0622 / NRRL Y-65 / CBS 138) (Yeast).